A 142-amino-acid polypeptide reads, in one-letter code: Transcriptional regulator MraZ (142 aa).

SpoVT-AbrB domains lie at 5-48 and 77-120; these read EFEY…PLCE and AFDV…DKET.

The protein belongs to the MraZ family. In terms of assembly, forms oligomers.

The protein localises to the cytoplasm. It localises to the nucleoid. The polypeptide is Transcriptional regulator MraZ (Dehalococcoides mccartyi (strain ATCC BAA-2100 / JCM 16839 / KCTC 5957 / BAV1)).